The chain runs to 356 residues: MGSTCSSPESKEQNRINSIIDKQIRKDEDNEIGNQKLLLLGTGECGKSTILKQINILHSSGYTKTDLKNVAGTVYSNIIQGMATLIKAKDQFYHEVTSPELDADAQHILALAESSKDAMPFIPLTFNSIKRLWHDPTVQKTFERRAEFQMMDTLVYFMNEIDRINDPEYIPTVDDMLRIRIPTMGVVQQVIEIKGTKFRIFDVGGQRSERRKWIHLFDNVNATIFISAINEYNQKLNEDGNANRMKESIKLFETICNSRWFVQAAMILFLNKRDLFEQKLKTTSINVLFSTYLGSNDYAECVAYIQLRFERLNKYADVKKIYTHVTCATDTNQIQLVIDSVVDMVIGRNLRGTGME.

Residue G2 is the site of N-myristoyl glycine attachment. The S-palmitoyl cysteine moiety is linked to residue C5. Residues 33-356 (GNQKLLLLGT…GRNLRGTGME (324 aa)) enclose the G-alpha domain. The G1 motif stretch occupies residues 36-49 (KLLLLGTGECGKST). GTP-binding positions include 41–48 (GTGECGKS), 177–183 (LRIRIPT), 202–206 (DVGGQ), 271–274 (NKRD), and A328. Mg(2+) is bound by residues S48 and T183. Positions 175 to 183 (DMLRIRIPT) are G2 motif. Positions 198-207 (FRIFDVGGQR) are G3 motif. The interval 267–274 (ILFLNKRD) is G4 motif. The tract at residues 326-331 (TCATDT) is G5 motif.

Belongs to the G-alpha family. G proteins are composed of 3 units; alpha, beta and gamma. The alpha chain contains the guanine nucleotide binding site.

In terms of biological role, guanine nucleotide-binding proteins (G proteins) are involved as modulators or transducers in various transmembrane signaling systems. This chain is Guanine nucleotide-binding protein alpha-15 subunit (gpa-15), found in Caenorhabditis briggsae.